The primary structure comprises 122 residues: Large ribosomal subunit protein bL17 (122 aa).

This sequence belongs to the bacterial ribosomal protein bL17 family. As to quaternary structure, part of the 50S ribosomal subunit. Contacts protein L32.

In Wigglesworthia glossinidia brevipalpis, this protein is Large ribosomal subunit protein bL17.